We begin with the raw amino-acid sequence, 381 residues long: Probable tRNA sulfurtransferase (381 aa).

The THUMP domain occupies R60–K168. Residues L186–L187, K269, G291, and Q300 contribute to the ATP site.

Belongs to the ThiI family.

It localises to the cytoplasm. The catalysed reaction is [ThiI sulfur-carrier protein]-S-sulfanyl-L-cysteine + a uridine in tRNA + 2 reduced [2Fe-2S]-[ferredoxin] + ATP + H(+) = [ThiI sulfur-carrier protein]-L-cysteine + a 4-thiouridine in tRNA + 2 oxidized [2Fe-2S]-[ferredoxin] + AMP + diphosphate. It catalyses the reaction [ThiS sulfur-carrier protein]-C-terminal Gly-Gly-AMP + S-sulfanyl-L-cysteinyl-[cysteine desulfurase] + AH2 = [ThiS sulfur-carrier protein]-C-terminal-Gly-aminoethanethioate + L-cysteinyl-[cysteine desulfurase] + A + AMP + 2 H(+). It functions in the pathway cofactor biosynthesis; thiamine diphosphate biosynthesis. Its function is as follows. Catalyzes the ATP-dependent transfer of a sulfur to tRNA to produce 4-thiouridine in position 8 of tRNAs, which functions as a near-UV photosensor. Also catalyzes the transfer of sulfur to the sulfur carrier protein ThiS, forming ThiS-thiocarboxylate. This is a step in the synthesis of thiazole, in the thiamine biosynthesis pathway. The sulfur is donated as persulfide by IscS. This chain is Probable tRNA sulfurtransferase, found in Thermococcus kodakarensis (strain ATCC BAA-918 / JCM 12380 / KOD1) (Pyrococcus kodakaraensis (strain KOD1)).